The primary structure comprises 62 residues: Large ribosomal subunit protein uL30 (62 aa).

The protein belongs to the universal ribosomal protein uL30 family. Part of the 50S ribosomal subunit.

The chain is Large ribosomal subunit protein uL30 from Shouchella clausii (strain KSM-K16) (Alkalihalobacillus clausii).